The following is a 490-amino-acid chain: MEPLTIVSLAVASFLLFAFWALSPKTSKNLPPGPPKLPIIGNIHQLKSPTPHRVLRNLAKKYGPIMHLQLGQVSTVVVSTPRLAREIMKTNDISFADRPTTTTSQIFFYKAQDIGWAPYGEYWRQMKKICTLELLSAKKVRSFSSIREEELRRISKVLESKAGTPVNFTEMTVEMVNNVICKATLGDSCKDQATLIEVLYDVLKTLSAFNLASYYPGLQFLNVILGKKAKWLKMQKQLDDILEDVLKEHRSKGRNKSDQEDLVDVLLRVKDTGGLDFTVTDEHVKAVVLDMLTAGTDTSSATLEWAMTELMRNPHMMKRAQEEVRSVVKGDTITETDLQSLHYLKLIVKETLRLHAPTPLLVPRECRQACNVDGYDIPAKTKILVNAWACGTDPDSWKDAESFIPERFENCPINYMGADFEFIPFGAGRRICPGLTFGLSMVEYPLANFLYHFDWKLPNGLKPHELDITEITGISTSLKHQLKIVPILKS.

A helical; Signal-anchor for type II membrane protein transmembrane segment spans residues 3–23; the sequence is PLTIVSLAVASFLLFAFWALS. N-linked (GlcNAc...) asparagine glycans are attached at residues Asn167 and Asn255. Position 432 (Cys432) interacts with heme.

The protein belongs to the cytochrome P450 family. The cofactor is heme.

It localises to the membrane. It catalyses the reaction germacra-1(10),4,11(13)-trien-12-oate + reduced [NADPH--hemoprotein reductase] + O2 = (+)-costunolide + oxidized [NADPH--hemoprotein reductase] + 2 H2O. It participates in secondary metabolite biosynthesis; terpenoid biosynthesis. In terms of biological role, involved in the biosynthesis of germacrene-derived sesquiterpene lactones. Component of the parthenolide biosynthetic pathway; parthenolide and conjugates are promising anti-cancer drugs highly active against colon cancer cells. Hydroxylates germacrene A acid to 6-alpha-hydroxy-germacrne A acid, a precursor of sesquiterpene lactones that spontaneously undergoes a lactonization which yields costunolide. In Lactuca sativa (Garden lettuce), this protein is Costunolide synthase.